The primary structure comprises 324 residues: Cuticle collagen sqt-1 (324 aa).

2 disordered regions span residues 68–108 (RRQY…TPNG) and 129–324 (SGPK…YRNI). A compositionally biased stretch (pro residues) spans 87–97 (SAPPGQPPAVP). 3 triple-helical region regions span residues 127–153 (GPSGPKGVPGVPGLDGVPGLDGVPGVG), 171–231 (QGPV…KGRD), and 237–299 (GRPG…PGKD). Composition is skewed to low complexity over residues 129–156 (SGPKGVPGVPGLDGVPGLDGVPGVGADD) and 177–201 (PGALGRPGPRGLPGPRGQNGNPGRD). Residues 227–236 (EKGRDAEHPI) show a composition bias toward basic and acidic residues.

This sequence belongs to the cuticular collagen family. As to quaternary structure, collagen polypeptide chains are complexed within the cuticle by disulfide bonds and other types of covalent cross-links.

Nematode cuticles are composed largely of collagen-like proteins. The cuticle functions both as an exoskeleton and as a barrier to protect the worm from its environment. This is a collagen critical for organismal morphogenesis. Mutations in sqt-1 can lengthen, shorten, or helically twist the entire animal. This chain is Cuticle collagen sqt-1 (sqt-1), found in Caenorhabditis elegans.